Consider the following 70-residue polypeptide: ATP synthase subunit c (70 aa).

Transmembrane regions (helical) follow at residues 4-24 (IAAGIALCGSAIGAGIGNGML) and 48-68 (ISMALVEAMPIIVIAMSFVLI).

This sequence belongs to the ATPase C chain family. In terms of assembly, F-type ATPases have 2 components, F(1) - the catalytic core - and F(0) - the membrane proton channel. F(1) has five subunits: alpha(3), beta(3), gamma(1), delta(1), epsilon(1). F(0) has three main subunits: a(1), b(2) and c(10-14). The alpha and beta chains form an alternating ring which encloses part of the gamma chain. F(1) is attached to F(0) by a central stalk formed by the gamma and epsilon chains, while a peripheral stalk is formed by the delta and b chains.

Its subcellular location is the cell membrane. F(1)F(0) ATP synthase produces ATP from ADP in the presence of a proton or sodium gradient. F-type ATPases consist of two structural domains, F(1) containing the extramembraneous catalytic core and F(0) containing the membrane proton channel, linked together by a central stalk and a peripheral stalk. During catalysis, ATP synthesis in the catalytic domain of F(1) is coupled via a rotary mechanism of the central stalk subunits to proton translocation. Functionally, key component of the F(0) channel; it plays a direct role in translocation across the membrane. A homomeric c-ring of between 10-14 subunits forms the central stalk rotor element with the F(1) delta and epsilon subunits. The chain is ATP synthase subunit c from Oenococcus oeni (strain ATCC BAA-331 / PSU-1).